A 340-amino-acid chain; its full sequence is UDP-3-O-(3-hydroxymyristoyl)glucosamine N-acyltransferase (340 aa).

The active-site Proton acceptor is the histidine 239.

This sequence belongs to the transferase hexapeptide repeat family. LpxD subfamily. As to quaternary structure, homotrimer.

It carries out the reaction a UDP-3-O-[(3R)-3-hydroxyacyl]-alpha-D-glucosamine + a (3R)-hydroxyacyl-[ACP] = a UDP-2-N,3-O-bis[(3R)-3-hydroxyacyl]-alpha-D-glucosamine + holo-[ACP] + H(+). The catalysed reaction is UDP-3-O-[(3R)-3-hydroxytetradecanoyl]-alpha-D-glucosamine + (3R)-hydroxytetradecanoyl-[ACP] = UDP-2-N,3-O-bis[(3R)-3-hydroxytetradecanoyl]-alpha-D-glucosamine + holo-[ACP] + H(+). It participates in glycolipid biosynthesis; lipid IV(A) biosynthesis; lipid IV(A) from (3R)-3-hydroxytetradecanoyl-[acyl-carrier-protein] and UDP-N-acetyl-alpha-D-glucosamine: step 3/6. Catalyzes the N-acylation of UDP-3-O-(hydroxytetradecanoyl)glucosamine using 3-hydroxytetradecanoyl-ACP as the acyl donor. Is involved in the biosynthesis of lipid A, a phosphorylated glycolipid that anchors the lipopolysaccharide to the outer membrane of the cell. The chain is UDP-3-O-(3-hydroxymyristoyl)glucosamine N-acyltransferase from Wigglesworthia glossinidia brevipalpis.